The primary structure comprises 198 residues: Chitin synthase 2 (198 aa).

Belongs to the chitin synthase family. Class III subfamily.

It is found in the cell membrane. It carries out the reaction [(1-&gt;4)-N-acetyl-beta-D-glucosaminyl](n) + UDP-N-acetyl-alpha-D-glucosamine = [(1-&gt;4)-N-acetyl-beta-D-glucosaminyl](n+1) + UDP + H(+). Its function is as follows. Polymerizes chitin, a structural polymer of the cell wall and septum, by transferring the sugar moiety of UDP-GlcNAc to the non-reducing end of the growing chitin polymer. The polypeptide is Chitin synthase 2 (CHS2) (Rhinocladiella atrovirens).